The following is a 333-amino-acid chain: Probable G-protein coupled receptor 174 (333 aa).

Over 1–27 (MPANYTCTRPDGDNTDFRYFIYAVTYT) the chain is Extracellular. The N-linked (GlcNAc...) asparagine glycan is linked to N4. A helical membrane pass occupies residues 28–48 (VILVPGLIGNILALWVFYGYM). The Cytoplasmic portion of the chain corresponds to 49–53 (KETKR). Residues 54 to 74 (AVIFMINLAIADLLQVLSLPL) form a helical membrane-spanning segment. Over 75-91 (RIFYYLNHDWPFGPGLC) the chain is Extracellular. C91 and C168 are joined by a disulfide. A helical transmembrane segment spans residues 92–112 (MFCFYLKYVNMYASIYFLVCI). The Cytoplasmic segment spans residues 113-134 (SVRRFWFLMYPFRFHDCKQKYD). The chain crosses the membrane as a helical span at residues 135-155 (LYISIAGWLIICLACVLFPLL). Over 156 to 182 (RTSDDTSGNRTKCFVDLPTRNVNLAQS) the chain is Extracellular. A glycan (N-linked (GlcNAc...) asparagine) is linked at N164. A helical membrane pass occupies residues 183-203 (VVMMTIGELIGFVTPLLIVLY). Residues 204–231 (CTWKTVLSLQDKYPMAQDLGEKQKALKM) lie on the Cytoplasmic side of the membrane. A helical membrane pass occupies residues 232 to 252 (ILTCAGVFLICFAPYHFSFPL). At 253–269 (DFLVKSNEIKSCLARRV) the chain is on the extracellular side. A helical transmembrane segment spans residues 270 to 290 (ILIFHSVALCLASLNSCLDPV). The Cytoplasmic segment spans residues 291–333 (IYYFSTNEFRRRLSRQDLHDSIQLHAKSFVSNHTASTMTPELC).

This sequence belongs to the G-protein coupled receptor 1 family. As to quaternary structure, interacts with GNA13. Interacts with CCL21.

The protein resides in the cell membrane. In terms of biological role, G-protein-coupled receptor of lysophosphatidylserine (LysoPS) that plays different roles in immune response. Plays a negative role in regulatory T-cell accumulation and homeostasis. Under inflammatory conditions where LysoPS production increases, contributes to the down-regulation of regulatory T-cell activity to favor effector response. Mediates the suppression of IL-2 production in activated T-lymphocytes leading to inhibition of growth, proliferation and differentiation of T-cells. Mechanistically, acts via G(s)-containing heterotrimeric G proteins to trigger elevated cyclic AMP levels and protein kinase A/PKA activity, which may in turn act to antagonize proximal TCR signaling. Plays an important role in the initial period of sepsis through the regulation of macrophage polarization and pro- and anti-inflammatory cytokine secretions. Upon testosterone treatment, acts as a receptor for CCL21 and subsequently triggers through G(q)-alpha and G(12)/G(13) proteins a calcium flux leading to chemotactic effects on activated B-cells. Signals via GNA13 and PKA to promote CD86 up-regulation by follicular B-cells. This Homo sapiens (Human) protein is Probable G-protein coupled receptor 174 (GPR174).